Reading from the N-terminus, the 161-residue chain is Small ribosomal subunit protein bS16 (161 aa).

Residues 114-161 are disordered; the sequence is EGGPTTEATKPKKKSPAKKAKGGEGDADAAAEKVEASAEGEQTESAES. Residues 124-133 are compositionally biased toward basic residues; the sequence is PKKKSPAKKA.

This sequence belongs to the bacterial ribosomal protein bS16 family.

This Mycobacterium marinum (strain ATCC BAA-535 / M) protein is Small ribosomal subunit protein bS16.